The chain runs to 83 residues: ATP synthase subunit c, chloroplastic (83 aa).

The next 2 helical transmembrane spans lie at proline 3–glycine 23 and phenylalanine 57–alanine 77.

Belongs to the ATPase C chain family. As to quaternary structure, F-type ATPases have 2 components, F(1) - the catalytic core - and F(0) - the membrane proton channel. F(1) has five subunits: alpha(3), beta(3), gamma(1), delta(1), epsilon(1). F(0) has four main subunits: a(1), b(1), b'(1) and c(10-14). The alpha and beta chains form an alternating ring which encloses part of the gamma chain. F(1) is attached to F(0) by a central stalk formed by the gamma and epsilon chains, while a peripheral stalk is formed by the delta, b and b' chains.

It is found in the plastid. The protein resides in the chloroplast thylakoid membrane. Its function is as follows. F(1)F(0) ATP synthase produces ATP from ADP in the presence of a proton or sodium gradient. F-type ATPases consist of two structural domains, F(1) containing the extramembraneous catalytic core and F(0) containing the membrane proton channel, linked together by a central stalk and a peripheral stalk. During catalysis, ATP synthesis in the catalytic domain of F(1) is coupled via a rotary mechanism of the central stalk subunits to proton translocation. Functionally, key component of the F(0) channel; it plays a direct role in translocation across the membrane. A homomeric c-ring of between 10-14 subunits forms the central stalk rotor element with the F(1) delta and epsilon subunits. This Oedogonium cardiacum (Filamentous green alga) protein is ATP synthase subunit c, chloroplastic.